Here is an 836-residue protein sequence, read N- to C-terminus: Probable RING finger protein 207 homolog (836 aa).

An RING-type zinc finger spans residues 8 to 42 (CTICKNDFEEPILFSCQHTTCRKCSNGSPSCKTCS). The B box-type 1; atypical zinc-finger motif lies at 68–115 (EEMEQCANCEQITLPMFYCETCQQSLCLACRNVTHQARMFSSHKIISS). Residues cysteine 73, cysteine 76, cysteine 97, and histidine 102 each coordinate Zn(2+). A B box-type 2; degenerate zinc finger spans residues 122-164 (YSSSLCKDHNEPYILYCSDVRKLVCIQCFNGRPLEERHSFISI). The stretch at 527 to 557 (QNRIMAIEKEEENRRLNQEAKKKEELAGQSA) forms a coiled coil. Basic and acidic residues predominate over residues 540-552 (RRLNQEAKKKEEL). The tract at residues 540–571 (RRLNQEAKKKEELAGQSAAMKSLKHGKTKRKE) is disordered. The segment covering 561-571 (SLKHGKTKRKE) has biased composition (basic residues).

In Caenorhabditis briggsae, this protein is Probable RING finger protein 207 homolog.